Consider the following 352-residue polypeptide: Ly6/PLAUR domain-containing protein 3 (352 aa).

The first 32 residues, 1–32 (MDAARRGDTQPVMWTTRWLLLLPLLLCEGAQA), serve as a signal peptide directing secretion. The UPAR/Ly6 1 domain maps to 35-128 (CYSCVQKADD…LNLTLRGLNP (94 aa)). Residues Asn-120, Asn-131, Asn-178, and Asn-185 are each glycosylated (N-linked (GlcNAc...) asparagine). In terms of domain architecture, UPAR/Ly6 2 spans 142–224 (CYSCMGLSRE…GSCCQGPRCN (83 aa)). Residues 236-249 (RIPPLVLLPPPTTP) show a composition bias toward pro residues. Residues 236 to 330 (RIPPLVLLPP…KGGAQIPSKG (95 aa)) are disordered. Low complexity predominate over residues 250–285 (APSTRTQNSSSTTSTTAPTTATTTIKPTTVQASHTS). 2 stretches are compositionally biased toward basic and acidic residues: residues 286 to 300 (STHETEHEVIQEEGS) and 309 to 320 (HQDRSNMGKFPE). Gly-330 carries GPI-anchor amidated glycine lipidation. The propeptide at 331–352 (GSDALGSWLSAILLTVVAGAML) is removed in mature form.

Interacts with AGR2 and AGR3. Binds laminin-1 and laminin-5. Interacts with LGALS3. As to expression, found predominantly on the basal layers of squamous epithelium. Expressed in the gravid uterus and on epithelial of the upper gastrointestinal tract. It has been found in tumor lines which metastasize via the lymphatic system.

It is found in the cell membrane. Supports cell migration. May be involved in tumor progression. The protein is Ly6/PLAUR domain-containing protein 3 (Lypd3) of Rattus norvegicus (Rat).